Consider the following 218-residue polypeptide: Small ribosomal subunit protein uS7 (218 aa).

It belongs to the universal ribosomal protein uS7 family. In terms of assembly, part of the 30S ribosomal subunit.

In terms of biological role, one of the primary rRNA binding proteins, it binds directly to 16S rRNA where it nucleates assembly of the head domain of the 30S subunit. Is located at the subunit interface close to the decoding center. This chain is Small ribosomal subunit protein uS7 (rps7), found in Pyrococcus horikoshii (strain ATCC 700860 / DSM 12428 / JCM 9974 / NBRC 100139 / OT-3).